A 71-amino-acid polypeptide reads, in one-letter code: MSEQKAAEVNQLIEDISQKLNMLNIGVIKAEDFSPDKYEDIEFLHQMVMKKSSFSPSEMQAIASELKNLRK.

The protein belongs to the UPF0435 family.

This Bacillus pumilus (strain SAFR-032) protein is UPF0435 protein BPUM_0734.